Reading from the N-terminus, the 119-residue chain is RIIa domain-containing protein 1 (119 aa).

In terms of domain architecture, RIIa spans 70–104; the sequence is KEVSLLISGFFREMFLKRPDNILEFAAHYFTDPRL.

In terms of tissue distribution, abundant in tissues rich in highly ciliated cells, such as testis, trachea and olfactory epithelium.

The chain is RIIa domain-containing protein 1 (Riiad1) from Mus musculus (Mouse).